The sequence spans 257 residues: Aspartate/glutamate leucyltransferase (257 aa).

The protein belongs to the R-transferase family. Bpt subfamily.

It localises to the cytoplasm. It catalyses the reaction N-terminal L-glutamyl-[protein] + L-leucyl-tRNA(Leu) = N-terminal L-leucyl-L-glutamyl-[protein] + tRNA(Leu) + H(+). The enzyme catalyses N-terminal L-aspartyl-[protein] + L-leucyl-tRNA(Leu) = N-terminal L-leucyl-L-aspartyl-[protein] + tRNA(Leu) + H(+). Its function is as follows. Functions in the N-end rule pathway of protein degradation where it conjugates Leu from its aminoacyl-tRNA to the N-termini of proteins containing an N-terminal aspartate or glutamate. This is Aspartate/glutamate leucyltransferase from Nitrobacter winogradskyi (strain ATCC 25391 / DSM 10237 / CIP 104748 / NCIMB 11846 / Nb-255).